Here is a 298-residue protein sequence, read N- to C-terminus: Probable GTP 3',8-cyclase (298 aa).

Residues 4-227 (RYGREIRSFR…MQNRKKYLID (224 aa)) enclose the Radical SAM core domain. GTP is bound at residue arginine 13. [4Fe-4S] cluster contacts are provided by cysteine 20 and cysteine 24. Tyrosine 26 lines the S-adenosyl-L-methionine pocket. Cysteine 27 serves as a coordination point for [4Fe-4S] cluster. Lysine 61 provides a ligand contact to GTP. Glycine 65 is an S-adenosyl-L-methionine binding site. Threonine 91 provides a ligand contact to GTP. Serine 115 contacts S-adenosyl-L-methionine. Lysine 152 is a binding site for GTP. [4Fe-4S] cluster is bound by residues cysteine 243 and cysteine 246. Position 248–250 (248–250 (RIR)) interacts with GTP. Cysteine 260 serves as a coordination point for [4Fe-4S] cluster.

This sequence belongs to the radical SAM superfamily. MoaA family. The cofactor is [4Fe-4S] cluster.

The enzyme catalyses GTP + AH2 + S-adenosyl-L-methionine = (8S)-3',8-cyclo-7,8-dihydroguanosine 5'-triphosphate + 5'-deoxyadenosine + L-methionine + A + H(+). It participates in cofactor biosynthesis; molybdopterin biosynthesis. Its function is as follows. Catalyzes the cyclization of GTP to (8S)-3',8-cyclo-7,8-dihydroguanosine 5'-triphosphate. The sequence is that of Probable GTP 3',8-cyclase from Methanococcus maripaludis (strain C5 / ATCC BAA-1333).